We begin with the raw amino-acid sequence, 486 residues long: UDP-N-acetylmuramate--L-alanine ligase (486 aa).

123 to 129 (GTHGKTT) lines the ATP pocket.

It belongs to the MurCDEF family.

It localises to the cytoplasm. The enzyme catalyses UDP-N-acetyl-alpha-D-muramate + L-alanine + ATP = UDP-N-acetyl-alpha-D-muramoyl-L-alanine + ADP + phosphate + H(+). It participates in cell wall biogenesis; peptidoglycan biosynthesis. In terms of biological role, cell wall formation. The chain is UDP-N-acetylmuramate--L-alanine ligase from Pseudomonas syringae pv. syringae (strain B728a).